A 142-amino-acid chain; its full sequence is Small ribosomal subunit protein uS12 (142 aa).

Residues Met-1 to Gln-44 form a disordered region. The span at Leu-11–Leu-32 shows a compositional bias: basic and acidic residues.

This sequence belongs to the universal ribosomal protein uS12 family. Part of the 30S ribosomal subunit.

With S4 and S5 plays an important role in translational accuracy. Located at the interface of the 30S and 50S subunits. The polypeptide is Small ribosomal subunit protein uS12 (Haloquadratum walsbyi (strain DSM 16790 / HBSQ001)).